The sequence spans 613 residues: Immunoglobulin superfamily member 8 (613 aa).

Residues 1 to 27 (MGALRPTLLPPSLPLLLLLMLGMGCWA) form the signal peptide. Ig-like C2-type domains lie at 28-149 (REVL…LRVL), 162-286 (PRGR…WAQI), 303-424 (SQLA…EAAS), and 431-560 (PVHV…WYQA). Residues 28–579 (REVLVPEGPL…VYPYMHALDT (552 aa)) are Extracellular-facing. Cysteine 49 and cysteine 127 are joined by a disulfide. A glycan (N-linked (GlcNAc...) asparagine) is linked at asparagine 50. The disordered stretch occupies residues 155 to 174 (VSAAPPGPRGRQAPTSPPRM). A disulfide bond links cysteine 186 and cysteine 270. The short motif at 274–276 (EWI) is the EWI motif element. 2 cysteine pairs are disulfide-bonded: cysteine 326–cysteine 406 and cysteine 462–cysteine 544. Asparagine 327 and asparagine 463 each carry an N-linked (GlcNAc...) asparagine glycan. Serine 518 is modified (phosphoserine). The helical transmembrane segment at 580-600 (LFVPLLVGTGVALVTGATVLG) threads the bilayer. Topologically, residues 601–613 (TITCCFMKRLRKR) are cytoplasmic. 2 S-palmitoyl cysteine lipidation sites follow: cysteine 604 and cysteine 605.

Interacts directly with CD82, CD81/tetraspanin-28 and CD9/tetraspanin-29. Also interacts with integrin alpha-3/beta-1 and integrin alpha-4/beta-1. Interacts with HSPA8; this interaction modulates migratory and antigen-presenting capacities of dendritic cells. Expressed in brain, kidney, testis, liver and placenta with moderate expression in all other tissues. Detected on a majority of B-cells, T-cells, and natural killer cells. Expressed on dendritic cells.

It is found in the cell membrane. In terms of biological role, member of the immunoglobulin superfamily (IgSF) that links tetraspanin-enriched microdomains to the actin cytoskeleton and plays several important roles in innate and adaptive immunity. Acts as an inducible receptor of HSPA8 on dendritic cells to enhance the CCL21/SLC-dependent migration of activated mature dendritic cells while attenuating their antigen-specific stimulatory capacities. In complex with alpha-actinins ACTN1 and ACTN4, regulates actin dynamics in the immune synapse and subsequent T-cell activation. Inhibits the entry of several viruses such as hepatitis C Virus (HCV) or HIV-1. Mechanistically, promotes a change in CD81 organization at the plasma membrane by significantly restricting its diffusion which in turn influences CD81 interaction with Claudin-1/CLDN1, preventing CLDN1 from acting as a co-receptor required for HCV entry. Accumulates at the presynaptic terminal, the producer cell side of the virological synapse, to prevent HIV-1 Env-mediated cell-cell fusion. Highly expressed on malignant cells with antigen presentation defects, interacts with NK receptor KIR3DL2 to suppress NK-cell cytotoxicity. May participate in the regulation of neurite outgrowth and maintenance of the neural network in the adult brain. The polypeptide is Immunoglobulin superfamily member 8 (IGSF8) (Homo sapiens (Human)).